Here is a 186-residue protein sequence, read N- to C-terminus: Threonylcarbamoyl-AMP synthase (186 aa).

The YrdC-like domain maps to threonine 5–leucine 186.

This sequence belongs to the SUA5 family. TsaC subfamily.

Its subcellular location is the cytoplasm. The catalysed reaction is L-threonine + hydrogencarbonate + ATP = L-threonylcarbamoyladenylate + diphosphate + H2O. In terms of biological role, required for the formation of a threonylcarbamoyl group on adenosine at position 37 (t(6)A37) in tRNAs that read codons beginning with adenine. Catalyzes the conversion of L-threonine, HCO(3)(-)/CO(2) and ATP to give threonylcarbamoyl-AMP (TC-AMP) as the acyladenylate intermediate, with the release of diphosphate. The sequence is that of Threonylcarbamoyl-AMP synthase from Coxiella burnetii (strain RSA 493 / Nine Mile phase I).